A 535-amino-acid chain; its full sequence is Tetrathionate hydrolase (535 aa).

Residues methionine 1 to lysine 39 form the signal peptide. The N-linked (GlcNAc...) asparagine glycan is linked to asparagine 50.

The protein belongs to the tetrathionate hydrolase family. Monomer and homodimer; in equilibrium.

The protein resides in the cell surface. The enzyme catalyses tetrathionate + H2O = sulfur + thiosulfate + sulfate + H(+). In terms of biological role, catalyzes the hydrolysis of tetrathionate to generate elemental sulfur, thiosulfate and sulfate. The chain is Tetrathionate hydrolase from Acidianus ambivalens (Desulfurolobus ambivalens).